We begin with the raw amino-acid sequence, 924 residues long: MGSALDTLKEFNPKPMKGQGSKKARIIIVQENPFDYEYRKKKYMTGKAGKLLKFGLAEVGIDPDEDVYYTSIVKYPTPENRLPTPDEIKESMDYMWAEIEVIDPDIIIPTGNLSLKFLTKMTAITKVRGKLYEIEGRKFFPMIHPNTVLKQPKYQDFFIKDLEILASLLEGKTPKNVLAFTKERRYCDTFEDAIDEIKRYLELPAGSRVVIDLETVKTNPFIEKVTMKKTTLEAYPMSQQPKIVGIGLSDRSGYGCAIPLYHRENLMKGNQIGTIVKFLRKLLEREDLEFIAHNGKFDIRWLRASLDIYLDISIWDTMLIHIIDYRGERYSWSKRLAWLETDMGGYDDALDGEKPKGEDEGNYDLIPWDILKVYLADDCDVTFRLSEKYIPLVEENEEKKWLWENIMVPGYYTLLDIEMDGIHVDREWLEVLRVSYEKEISRLEDKMREFPEGVAMEREMRDKWKERVMIGNIKSANRTPEQQDKFKKYKKYDPSKGGDKINFGSTKQLGELLFERMGLETVIFTDKGAPSTNDDSLKFMGSQSDFVKVLMEFRKANHLYNNFVSKLSLMIDPDNIVHPSYNIHGTVTGRLSSNEPNAQQFPRKVNTPTLFQYNFEIKKMFNSRFGDGGVIVQFDYSQLELRILVCYYSRPYTIDLYRSGADLHKAVASDAFGVAIEEVSKDQRTASKKIQFGIVYQESARGLSEDLRAEGITMSEDECEIFIKKYFKRFPKVSKWIRDTKKHVKDISTVKTLTGATRNLPDIDSIDQSKANEAERQAVNTPIQGTGSDCTLMSLILINQWLRESGLRSRICITVHDSIVLDCPKDEVLEVAKKVKHIMENLGEYNEFYKFLGDVPILSEMEIGRNYGDAFEATIEDIEEHGVDGFIEMKEKEKLEKDMKEFTKIIEDGGSIPDYARIYWENIS.

In terms of domain architecture, 3'-5' exonuclease spans 235–386 (YPMSQQPKIV…DDCDVTFRLS (152 aa)).

The protein belongs to the DNA polymerase type-A family.

The catalysed reaction is DNA(n) + a 2'-deoxyribonucleoside 5'-triphosphate = DNA(n+1) + diphosphate. Functionally, replicates viral genomic DNA. This polymerase possesses two enzymatic activities: DNA synthesis (polymerase) and an exonucleolytic activity that degrades single-stranded DNA in the 3'-5' direction. This chain is DNA polymerase (31), found in Bacillus phage SP01 (Bacteriophage SP01).